The sequence spans 477 residues: RTX-III toxin determinant D (477 aa).

Residues 1-59 lie on the Cytoplasmic side of the membrane; it reads MKLWILGLGEFFQRYRNIWREIWKIRKQLDTPARQKDENEFLPRHLELIETPISKKPRL. Residues 60-77 traverse the membrane as a helical segment; sequence IAYLIMLFLFLAIVISII. Residues 78-477 are Periplasmic-facing; that stretch reads SKVEIVASAT…ESITESLRER (400 aa).

The protein belongs to the membrane fusion protein (MFP) (TC 8.A.1) family.

It localises to the cell inner membrane. Involved in the transport of the toxin RTX-III. The protein is RTX-III toxin determinant D (apxIIID) of Actinobacillus pleuropneumoniae (Haemophilus pleuropneumoniae).